Consider the following 176-residue polypeptide: Cytochrome b (176 aa).

3 helical membrane passes run 33-53, 77-98, and 113-133; these read FGSL…FLAM, WLIR…FLHV, and WNIG…GYVL. Residues H83 and H97 each contribute to the heme b site.

Belongs to the cytochrome b family. The cytochrome bc1 complex contains 11 subunits: 3 respiratory subunits (MT-CYB, CYC1 and UQCRFS1), 2 core proteins (UQCRC1 and UQCRC2) and 6 low-molecular weight proteins (UQCRH/QCR6, UQCRB/QCR7, UQCRQ/QCR8, UQCR10/QCR9, UQCR11/QCR10 and a cleavage product of UQCRFS1). This cytochrome bc1 complex then forms a dimer. The cofactor is heme b.

It is found in the mitochondrion inner membrane. Component of the ubiquinol-cytochrome c reductase complex (complex III or cytochrome b-c1 complex) that is part of the mitochondrial respiratory chain. The b-c1 complex mediates electron transfer from ubiquinol to cytochrome c. Contributes to the generation of a proton gradient across the mitochondrial membrane that is then used for ATP synthesis. The chain is Cytochrome b (MT-CYB) from Sciurus carolinensis (Eastern gray squirrel).